Reading from the N-terminus, the 490-residue chain is RNA-binding post-transcriptional regulator cip1 (490 aa).

Disordered stretches follow at residues 16 to 63 (RGLA…GSSA), 76 to 97 (ASSRAASPAPSDSFPTFGYSQL), and 138 to 199 (HNVS…GEDT). Positions 34–62 (RLQSPLNSPKLQPIGSPQASRKTSGSGSS) are enriched in polar residues. Ser37, Ser41, Ser49, Ser86, and Ser141 each carry phosphoserine. 2 stretches are compositionally biased toward low complexity: residues 76–88 (ASSRAASPAPSDS) and 141–160 (SPPSGAESSSESKSFSASGK). Residues 164-192 (ADTSAEPSLDAFNSTQIKAGSTANSNSTP) are compositionally biased toward polar residues. The region spanning 202 to 280 (TAIVVKNIPF…RRLRVEWKRQ (79 aa)) is the RRM domain. 3 positions are modified to phosphoserine: Ser397, Ser401, and Ser427. Thr431 is subject to Phosphothreonine. Phosphoserine is present on residues Ser435, Ser456, and Ser466. The segment at 457 to 490 (PLQKASTLSSPFNSKNDNDASTSASKQSFGVSHF) is disordered.

As to quaternary structure, interacts with csx1. Post-translationally, phosphorylated by sty1.

Its subcellular location is the cytoplasm. Functionally, regulates global gene expression after oxidative stress. Interacts and stabilizes mRNAs and may regulate their transition between different cytoplasmic components after oxidative stress. The chain is RNA-binding post-transcriptional regulator cip1 (cip1) from Schizosaccharomyces pombe (strain 972 / ATCC 24843) (Fission yeast).